Reading from the N-terminus, the 295-residue chain is (R)-3-hydroxydecanoyl-ACP:CoA transacylase (295 aa).

One can recognise an AB hydrolase-1 domain in the interval 28–254 (NTIILINGSL…VIRDAGHFLD (227 aa)).

It functions in the pathway polyester biosynthesis; polyhydroxyalkanoate biosynthesis. Functionally, catalyzes the transfer of the acyl moiety from in vitro synthesized 3-hydroxydecanoyl-CoA to acyl carrier protein. The protein is (R)-3-hydroxydecanoyl-ACP:CoA transacylase (phaG) of Ectopseudomonas oleovorans (Pseudomonas oleovorans).